The sequence spans 638 residues: Factor of DNA methylation 3 (638 aa).

A coiled-coil region spans residues 318–497 (FNRIFADHEK…RALISNLRDM (180 aa)).

Acts in association with FDM4 and FDM5 for RNA-directed DNA methylation (RdDM). This Arabidopsis thaliana (Mouse-ear cress) protein is Factor of DNA methylation 3.